A 331-amino-acid chain; its full sequence is DNA polymerase IV (331 aa).

The UmuC domain maps to 1–174; that stretch reads FFAAVEMRDN…LPLAKIPGVG (174 aa). A Mg(2+)-binding site is contributed by Asp92. Glu93 is a catalytic residue.

It belongs to the DNA polymerase type-Y family. Monomer. It depends on Mg(2+) as a cofactor.

It is found in the cytoplasm. It carries out the reaction DNA(n) + a 2'-deoxyribonucleoside 5'-triphosphate = DNA(n+1) + diphosphate. Functionally, poorly processive, error-prone DNA polymerase involved in untargeted mutagenesis. Copies undamaged DNA at stalled replication forks, which arise in vivo from mismatched or misaligned primer ends. These misaligned primers can be extended by PolIV. Exhibits no 3'-5' exonuclease (proofreading) activity. May be involved in translesional synthesis, in conjunction with the beta clamp from PolIII. The protein is DNA polymerase IV of Escherichia fergusonii.